A 516-amino-acid polypeptide reads, in one-letter code: Putative fatty acyl-CoA reductase CG8306 (516 aa).

A run of 3 helical transmembrane segments spans residues 356–376, 471–491, and 496–516; these read WVFR…LDLV, ILLG…FKLI, and GIST…FGLL.

The protein belongs to the fatty acyl-CoA reductase family.

It is found in the membrane. The enzyme catalyses a long-chain fatty acyl-CoA + 2 NADPH + 2 H(+) = a long-chain primary fatty alcohol + 2 NADP(+) + CoA. Catalyzes the reduction of C16 or C18 fatty acyl-CoA to fatty alcohols. The chain is Putative fatty acyl-CoA reductase CG8306 from Drosophila melanogaster (Fruit fly).